A 109-amino-acid chain; its full sequence is Sulredoxin (109 aa).

In terms of domain architecture, Rieske spans 3 to 107 (WKRTISAKAL…IRDNNGWIEV (105 aa)). Residues Cys-43, His-45, Cys-62, and His-65 each contribute to the [2Fe-2S] cluster site.

As to quaternary structure, homooligomeric. [2Fe-2S] cluster serves as cofactor.

The protein localises to the cytoplasm. Its function is as follows. Not yet known. The polypeptide is Sulredoxin (sdx) (Sulfurisphaera tokodaii (strain DSM 16993 / JCM 10545 / NBRC 100140 / 7) (Sulfolobus tokodaii)).